The chain runs to 56 residues: Large ribosomal subunit protein bL33 (56 aa).

The protein belongs to the bacterial ribosomal protein bL33 family.

The chain is Large ribosomal subunit protein bL33 from Ehrlichia ruminantium (strain Gardel).